A 488-amino-acid chain; its full sequence is Ribulose bisphosphate carboxylase large chain (488 aa).

2 residues coordinate substrate: asparagine 127 and threonine 177. The active-site Proton acceptor is lysine 179. Substrate is bound at residue lysine 181. Mg(2+) is bound by residues lysine 205, aspartate 207, and glutamate 208. N6-carboxylysine is present on lysine 205. The active-site Proton acceptor is histidine 297. Residues arginine 298, histidine 330, and serine 382 each coordinate substrate.

This sequence belongs to the RuBisCO large chain family. Type I subfamily. Heterohexadecamer of 8 large chains and 8 small chains. Mg(2+) serves as cofactor.

It is found in the plastid. The protein resides in the chloroplast. The enzyme catalyses 2 (2R)-3-phosphoglycerate + 2 H(+) = D-ribulose 1,5-bisphosphate + CO2 + H2O. It catalyses the reaction D-ribulose 1,5-bisphosphate + O2 = 2-phosphoglycolate + (2R)-3-phosphoglycerate + 2 H(+). Its function is as follows. RuBisCO catalyzes two reactions: the carboxylation of D-ribulose 1,5-bisphosphate, the primary event in carbon dioxide fixation, as well as the oxidative fragmentation of the pentose substrate in the photorespiration process. Both reactions occur simultaneously and in competition at the same active site. This is Ribulose bisphosphate carboxylase large chain from Porphyra purpurea (Red seaweed).